Reading from the N-terminus, the 239-residue chain is 4-hydroxy-tetrahydrodipicolinate reductase (239 aa).

NAD(+) is bound by residues 9 to 14 (GINGKM), 78 to 80 (GTT), and 104 to 107 (APNF). The active-site Proton donor/acceptor is H134. H135 contacts (S)-2,3,4,5-tetrahydrodipicolinate. K138 functions as the Proton donor in the catalytic mechanism. 144–145 (GT) contacts (S)-2,3,4,5-tetrahydrodipicolinate.

Belongs to the DapB family.

It is found in the cytoplasm. It catalyses the reaction (S)-2,3,4,5-tetrahydrodipicolinate + NAD(+) + H2O = (2S,4S)-4-hydroxy-2,3,4,5-tetrahydrodipicolinate + NADH + H(+). The catalysed reaction is (S)-2,3,4,5-tetrahydrodipicolinate + NADP(+) + H2O = (2S,4S)-4-hydroxy-2,3,4,5-tetrahydrodipicolinate + NADPH + H(+). Its pathway is amino-acid biosynthesis; L-lysine biosynthesis via DAP pathway; (S)-tetrahydrodipicolinate from L-aspartate: step 4/4. Functionally, catalyzes the conversion of 4-hydroxy-tetrahydrodipicolinate (HTPA) to tetrahydrodipicolinate. The chain is 4-hydroxy-tetrahydrodipicolinate reductase from Coxiella burnetii (strain Dugway 5J108-111).